The chain runs to 142 residues: Large ribosomal subunit protein uL13 (142 aa).

Belongs to the universal ribosomal protein uL13 family. As to quaternary structure, part of the 50S ribosomal subunit.

This protein is one of the early assembly proteins of the 50S ribosomal subunit, although it is not seen to bind rRNA by itself. It is important during the early stages of 50S assembly. The polypeptide is Large ribosomal subunit protein uL13 (Delftia acidovorans (strain DSM 14801 / SPH-1)).